The primary structure comprises 79 residues: Defensin 2 (79 aa).

The first 32 residues, 1–32 (VQKRTIIMEKKMAGFCIFFLILFLAQEYGVEG), serve as a signal peptide directing secretion. 3 disulfides stabilise this stretch: Cys-35–Cys-79, Cys-46–Cys-67, and Cys-52–Cys-73.

This sequence belongs to the DEFL family. In terms of assembly, may form dimers. Post-translationally, not glycosylated. Has 4 disulfide bonds.

Probably has antifungal activity. The polypeptide is Defensin 2 (Arachis hypogaea (Peanut)).